The chain runs to 128 residues: C-C motif chemokine 28 (128 aa).

The first 24 residues, 1 to 24, serve as a signal peptide directing secretion; that stretch reads MQQTGLTLALVALAVCVALPSSEA. 2 cysteine pairs are disulfide-bonded: cysteine 32/cysteine 60 and cysteine 33/cysteine 75. A disordered region spans residues 89–128; sequence EQAAKKNTKGNICHKKQAGKRKSKGAHQEKPEIHSHKSPY. Over residues 94-113 the composition is skewed to basic residues; that stretch reads KNTKGNICHKKQAGKRKSKG. Residues 114–128 show a composition bias toward basic and acidic residues; the sequence is AHQEKPEIHSHKSPY.

It belongs to the intercrine beta (chemokine CC) family.

It is found in the secreted. Its function is as follows. Chemotactic activity for resting CD4, CD8 T-cells and eosinophils. Binds to CCR3 and CCR10 and induces calcium mobilization in a dose-dependent manner. This chain is C-C motif chemokine 28 (CCL28), found in Canis lupus familiaris (Dog).